An 806-amino-acid chain; its full sequence is Conserved oligomeric Golgi complex subunit 6 (806 aa).

This sequence belongs to the COG6 family.

It localises to the golgi apparatus membrane. Its function is as follows. Acts as a component of the peripheral membrane COG complex that is involved in intra-Golgi protein trafficking. COG is located at the cis-Golgi, and regulates tethering of retrograde intra-Golgi vesicles and possibly a number of other membrane trafficking events. The sequence is that of Conserved oligomeric Golgi complex subunit 6 (COG6) from Eremothecium gossypii (strain ATCC 10895 / CBS 109.51 / FGSC 9923 / NRRL Y-1056) (Yeast).